The primary structure comprises 579 residues: Putative diflavin flavoprotein A 2 (579 aa).

Residues 50–243 are zinc metallo-hydrolase; the sequence is QNGTTYNSYL…GKIKIIANGH (194 aa). Fe cation is bound by residues His-99, Glu-101, Asp-103, His-166, Asp-185, and His-243. One can recognise a Flavodoxin-like domain in the interval 272–460; that stretch reads VGLFYVADYG…MLASWVSQAS (189 aa). The tract at residues 461-579 is flavodoxin-reductase-like; sequence LQPLGFTIAV…VRHRKVGNYY (119 aa).

It in the N-terminal section; belongs to the zinc metallo-hydrolase group 3 family. The protein in the C-terminal section; belongs to the flavodoxin reductase family. Fe cation serves as cofactor.

Functionally, mediates electron transfer from NADH to oxygen, reducing it to water. This modular protein has 3 redox cofactors, in other organisms the same activity requires 2 or 3 proteins. The chain is Putative diflavin flavoprotein A 2 (dfa2) from Nostoc sp. (strain PCC 7120 / SAG 25.82 / UTEX 2576).